An 82-amino-acid polypeptide reads, in one-letter code: Neuromacin (82 aa).

Residues 1-23 (MALLNKLLCFALVFMIFGEFVTP) form the signal peptide. 4 cysteine pairs are disulfide-bonded: cysteine 25/cysteine 32, cysteine 47/cysteine 51, cysteine 61/cysteine 69, and cysteine 79/cysteine 81.

This sequence belongs to the macin family.

Its subcellular location is the secreted. This chain is Neuromacin, found in Hirudo medicinalis (Medicinal leech).